We begin with the raw amino-acid sequence, 231 residues long: Large ribosomal subunit protein uL1 (231 aa).

The protein belongs to the universal ribosomal protein uL1 family. As to quaternary structure, part of the 50S ribosomal subunit.

Functionally, binds directly to 23S rRNA. The L1 stalk is quite mobile in the ribosome, and is involved in E site tRNA release. In terms of biological role, protein L1 is also a translational repressor protein, it controls the translation of the L11 operon by binding to its mRNA. The chain is Large ribosomal subunit protein uL1 from Methylocella silvestris (strain DSM 15510 / CIP 108128 / LMG 27833 / NCIMB 13906 / BL2).